The sequence spans 1288 residues: Contactin-associated protein-like 3 (1288 aa).

An N-terminal signal peptide occupies residues 1–25 (MASVAWAVLKVLLLLPTQTWSPVGA). The Extracellular portion of the chain corresponds to 26–1245 (GNPPDCDAPL…LVNADRRDSA (1220 aa)). The F5/8 type C domain maps to 31-177 (CDAPLASALP…IGMRIEVYGC (147 aa)). The cysteines at positions 31 and 177 are disulfide-linked. 2 Laminin G-like domains span residues 183–364 (VVYF…SFSC) and 370–545 (VPVT…IDSC). N285, N359, N441, and N497 each carry an N-linked (GlcNAc...) asparagine glycan. The cysteines at positions 332 and 364 are disulfide-linked. 4 disulfides stabilise this stretch: C513–C545, C551–C562, C556–C571, and C573–C583. The 33-residue stretch at 551–583 (CLPSYCEHGGECSQSWDTFSCDCLGTGYTGETC) folds into the EGF-like 1 domain. The Fibrinogen C-terminal domain occupies 584–792 (HSSLYEQSCE…LLCRGDQSFW (209 aa)). N623 and N706 each carry an N-linked (GlcNAc...) asparagine glycan. The Laminin G-like 3 domain maps to 793–958 (NSASFNTETS…TVTPGVEPGC (166 aa)). 4 cysteine pairs are disulfide-bonded: C931–C958, C962–C975, C969–C984, and C986–C996. Positions 962–996 (CSTYGHLCRNGGRCREKRRGVTCDCAFSAYDGPFC) constitute an EGF-like 2 domain. The 189-residue stretch at 1015-1203 (QEHYTLSENS…RGHVAPMARC (189 aa)) folds into the Laminin G-like 4 domain. Residues N1023, N1073, and N1120 are each glycosylated (N-linked (GlcNAc...) asparagine). Cysteines 1167 and 1203 form a disulfide. The interval 1215-1236 (ELAPRLAGGAGRSGPADEGEPL) is disordered. Residues 1246–1266 (VIGGVIAVVIFILLCITAIAI) form a helical membrane-spanning segment. At 1267 to 1288 (RIYQQRKLRKENESKVSKKEEC) the chain is on the cytoplasmic side.

The protein belongs to the neurexin family.

It is found in the cell membrane. It localises to the secreted. The sequence is that of Contactin-associated protein-like 3 (CNTNAP3) from Homo sapiens (Human).